Consider the following 158-residue polypeptide: Regulator of sigma D (158 aa).

Belongs to the Rsd/AlgQ family. In terms of assembly, interacts with RpoD.

It localises to the cytoplasm. Binds RpoD and negatively regulates RpoD-mediated transcription activation by preventing the interaction between the primary sigma factor RpoD with the catalytic core of the RNA polymerase and with promoter DNA. May be involved in replacement of the RNA polymerase sigma subunit from RpoD to RpoS during the transition from exponential growth to the stationary phase. The polypeptide is Regulator of sigma D (Escherichia coli O127:H6 (strain E2348/69 / EPEC)).